The following is a 157-amino-acid chain: MFDVLMYLFETYIHTEAELRVDQDKLEQDLTDAGFDREDIYNALLWLEKLADYQEGLAEPMQLASDPLSMRIYTPEECERLDASCRGFLLFLEQIQVLNLETREMVIERVLALDNAEFELDDLKWVILMVLFNIPGCENAYQQMEELLFEVNEGMLH.

It belongs to the Smg family.

The protein is Protein Smg of Escherichia coli O8 (strain IAI1).